Here is an 832-residue protein sequence, read N- to C-terminus: Cytosolic carboxypeptidase-like protein 5 (832 aa).

Positions 27 to 50 are disordered; the sequence is TVPSDGEGVGGAATAPTSGSASSP. A compositionally biased stretch (low complexity) spans 38–50; sequence AATAPTSGSASSP. In terms of domain architecture, Peptidase M14 spans 157 to 571; the sequence is YPFSYSDCQD…ALAIAALDMA (415 aa). Zn(2+) contacts are provided by His-252 and Glu-255. Residues 343–354 show a composition bias toward low complexity; sequence NSKNPSNQQPSS. Disordered stretches follow at residues 343-362 and 376-402; these read NSKN…PEVP and LHLG…KTDP. Positions 384 to 401 are enriched in basic and acidic residues; that stretch reads GENHDRWTETEPTEEKTD. Residue His-435 coordinates Zn(2+). Glu-517 functions as the Proton donor/acceptor in the catalytic mechanism. The segment at 606 to 752 is disordered; it reads STANVGLNKK…ASPTSSRNMG (147 aa). Positions 621 to 636 are enriched in polar residues; sequence PPKSNNGLPVSCSENA. Residues 644-654 are compositionally biased toward low complexity; the sequence is STGTSTGGSSS. Polar residues predominate over residues 655–666; the sequence is QQNSPQMKNSPS. Residues 708 to 752 are compositionally biased toward low complexity; that stretch reads QQQQQQQQQQQQQQQQPLNQRSTTSSLAPSPTLASASPTSSRNMG.

This sequence belongs to the peptidase M14 family. Requires Zn(2+) as cofactor.

The protein localises to the cytoplasm. It is found in the cytosol. It localises to the nucleus. Its subcellular location is the cytoskeleton. The protein resides in the spindle. The protein localises to the midbody. The catalysed reaction is gamma-L-glutamyl-L-glutamyl-[protein] + H2O = L-glutamyl-[protein] + L-glutamate. The enzyme catalyses (L-glutamyl)(n+1)-gamma-L-glutamyl-L-glutamyl-[protein] + H2O = (L-glutamyl)(n)-gamma-L-glutamyl-L-glutamyl-[protein] + L-glutamate. It catalyses the reaction C-terminal L-alpha-aminoacyl-L-glutamyl-[tubulin] + H2O = C-terminal L-alpha-aminoacyl-[tubulin] + L-glutamate. It carries out the reaction C-terminal L-alpha-aminoacyl-L-glutamyl-L-glutamyl-[tubulin] + H2O = C-terminal L-alpha-aminoacyl-L-glutamyl-[tubulin] + L-glutamate. In terms of biological role, metallocarboxypeptidase that mediates deglutamylation of tubulin and non-tubulin target proteins. Catalyzes the removal of polyglutamate side chains present on the gamma-carboxyl group of glutamate residues within the C-terminal tail of alpha- and beta-tubulin. Cleaves alpha- and gamma-linked polyglutamate tubulin side-chain, as well as the branching point glutamate. Also catalyzes the removal of alpha-linked glutamate residues from the carboxy-terminus of alpha-tubulin. Mediates deglutamylation of nucleotidyltransferase CGAS, leading to CGAS antiviral defense response activation. The sequence is that of Cytosolic carboxypeptidase-like protein 5 (Agbl5) from Rattus norvegicus (Rat).